We begin with the raw amino-acid sequence, 749 residues long: Photosystem I P700 chlorophyll a apoprotein A2 (749 aa).

8 helical membrane passes run 46–69 (LFST…FHIA), 135–158 (LYQG…LHLQ), 175–199 (MNHH…HVAI), 273–291 (ISHH…GHMY), 343–366 (LHFQ…HHMG), 382–408 (AALY…IFFV), 430–452 (ALIS…LYLH), and 532–550 (FLVH…LILI). [4Fe-4S] cluster is bound by residues cysteine 574 and cysteine 583. The next 2 helical transmembrane spans lie at 590–611 (STYM…YWHW) and 658–680 (LSPW…MFLI). Residues histidine 669, methionine 677, and tyrosine 685 each contribute to the divinyl chlorophyll a site. Tryptophan 686 is a binding site for phylloquinone. Residues 722 to 742 (LVGVTHFAVGNIFTFGAFVIA) traverse the membrane as a helical segment.

It belongs to the PsaA/PsaB family. In terms of assembly, the PsaA/B heterodimer binds the P700 chlorophyll special pair and subsequent electron acceptors. PSI consists of a core antenna complex that captures photons, and an electron transfer chain that converts photonic excitation into a charge separation. The cyanobacterial PSI reaction center is composed of one copy each of PsaA,B,C,D,E,F,I,J,K,L,M and X, and forms trimeric complexes. PSI electron transfer chain: 5 divinyl chlorophyll a, 1 divinyl chlorophyll a', 2 phylloquinones and 3 4Fe-4S clusters. PSI core antenna: 90 divinyl chlorophyll a, 22 carotenoids, 3 phospholipids and 1 galactolipid. P700 is a divinyl chlorophyll a/divinyl chlorophyll a' dimer, A0 is one or more divinyl chlorophyll a, A1 is one or both phylloquinones and FX is a shared 4Fe-4S iron-sulfur center. serves as cofactor.

It is found in the cellular thylakoid membrane. It carries out the reaction reduced [plastocyanin] + hnu + oxidized [2Fe-2S]-[ferredoxin] = oxidized [plastocyanin] + reduced [2Fe-2S]-[ferredoxin]. Functionally, psaA and PsaB bind P700, the primary electron donor of photosystem I (PSI), as well as the electron acceptors A0, A1 and FX. PSI is a plastocyanin/cytochrome c6-ferredoxin oxidoreductase, converting photonic excitation into a charge separation, which transfers an electron from the donor P700 chlorophyll pair to the spectroscopically characterized acceptors A0, A1, FX, FA and FB in turn. Oxidized P700 is reduced on the lumenal side of the thylakoid membrane by plastocyanin or cytochrome c6. This chain is Photosystem I P700 chlorophyll a apoprotein A2, found in Prochlorococcus marinus (strain MIT 9313).